Reading from the N-terminus, the 189-residue chain is Small ribosomal subunit protein uS5 (189 aa).

Residues 22–85 (FVDKLVAINR…ESAKRDLIFV (64 aa)) enclose the S5 DRBM domain.

This sequence belongs to the universal ribosomal protein uS5 family. As to quaternary structure, part of the 30S ribosomal subunit. Contacts proteins S4 and S8.

With S4 and S12 plays an important role in translational accuracy. Its function is as follows. Located at the back of the 30S subunit body where it stabilizes the conformation of the head with respect to the body. This chain is Small ribosomal subunit protein uS5, found in Allorhizobium ampelinum (strain ATCC BAA-846 / DSM 112012 / S4) (Agrobacterium vitis (strain S4)).